Consider the following 169-residue polypeptide: Cell division inhibitor SulA (169 aa).

The interval 106 to 112 (ALRTGNY) is ftsZ binding. Residues 162–169 (KIHSNLYH) are lon protease binding.

It belongs to the SulA family. Interacts with FtsZ. In terms of processing, is rapidly cleaved and degraded by the Lon protease once DNA damage is repaired.

Component of the SOS system and an inhibitor of cell division. Accumulation of SulA causes rapid cessation of cell division and the appearance of long, non-septate filaments. In the presence of GTP, binds a polymerization-competent form of FtsZ in a 1:1 ratio, thus inhibiting FtsZ polymerization and therefore preventing it from participating in the assembly of the Z ring. This mechanism prevents the premature segregation of damaged DNA to daughter cells during cell division. This is Cell division inhibitor SulA from Salmonella dublin (strain CT_02021853).